Consider the following 381-residue polypeptide: Sulfate adenylyltransferase (381 aa).

This sequence belongs to the sulfate adenylyltransferase family.

The enzyme catalyses sulfate + ATP + H(+) = adenosine 5'-phosphosulfate + diphosphate. It participates in sulfur metabolism; hydrogen sulfide biosynthesis; sulfite from sulfate: step 1/3. This Chloroflexus aurantiacus (strain ATCC 29366 / DSM 635 / J-10-fl) protein is Sulfate adenylyltransferase.